We begin with the raw amino-acid sequence, 351 residues long: Nicotinate-nucleotide--dimethylbenzimidazole phosphoribosyltransferase (351 aa).

The Proton acceptor role is filled by Glu-317.

It belongs to the CobT family.

The catalysed reaction is 5,6-dimethylbenzimidazole + nicotinate beta-D-ribonucleotide = alpha-ribazole 5'-phosphate + nicotinate + H(+). It participates in nucleoside biosynthesis; alpha-ribazole biosynthesis; alpha-ribazole from 5,6-dimethylbenzimidazole: step 1/2. Its function is as follows. Catalyzes the synthesis of alpha-ribazole-5'-phosphate from nicotinate mononucleotide (NAMN) and 5,6-dimethylbenzimidazole (DMB). The polypeptide is Nicotinate-nucleotide--dimethylbenzimidazole phosphoribosyltransferase (Bradyrhizobium sp. (strain BTAi1 / ATCC BAA-1182)).